A 225-amino-acid chain; its full sequence is RNA-binding protein 24 (225 aa).

Residues 11–88 (TKIFVGGLPY…RKANVNLAYL (78 aa)) form the RRM domain.

The protein resides in the nucleus. It localises to the cytoplasm. Functionally, multifunctional RNA-binding protein involved in the regulation of pre-mRNA splicing, mRNA stability and mRNA translation important for cell fate decision and differentiation. Plays a major role in pre-mRNA alternative splicing regulation. Mediates preferentially muscle-specific exon inclusion in numerous mRNAs important for striated cardiac and skeletal muscle cell differentiation. Binds to intronic splicing enhancer (ISE) composed of stretches of GU-rich motifs localized in flanking intron of exon that will be included by alternative splicing. Involved in embryonic stem cell (ESC) transition to cardiac cell differentiation by promoting pre-mRNA alternative splicing events of several pluripotency and/or differentiation genes. Plays a role in the regulation of mRNA stability and mRNA translation to which it is bound. Involved in myogenic differentiation by regulating MYOG levels. Binds to a huge amount of mRNAs. Involved in embryonic heart development and myogenic differentiation of somitic muscle progenitors. This is RNA-binding protein 24 from Gallus gallus (Chicken).